A 305-amino-acid polypeptide reads, in one-letter code: Syntaxin-123 (305 aa).

N-acetylmethionine is present on M1. Topologically, residues 1–278 (MNDLISSSFK…KVLQRNNRKW (278 aa)) are cytoplasmic. The stretch at 46 to 66 (VKEDMKAVDEIHKRLQDANEE) forms a coiled coil. The region spanning 206–268 (LSEIQERHDT…MRGTDQLHGA (63 aa)) is the t-SNARE coiled-coil homology domain. A helical; Anchor for type IV membrane protein transmembrane segment spans residues 279-299 (ACIATILAIVVVIVILFPILF). Over 300–305 (NTLLRP) the chain is Vesicular.

The protein belongs to the syntaxin family. As to quaternary structure, part of the t-SNARE complex. As to expression, expressed in tips of root hairs.

It is found in the membrane. In terms of biological role, vesicle trafficking protein that functions in the secretory pathway. Acts in coordination with SYP132 to mediate tip-focused membrane trafficking for root hair tip growth. Functions in root hair elongation by forming SNARE complexes with VAMP721,VAMP722 or VAMP724. In Arabidopsis thaliana (Mouse-ear cress), this protein is Syntaxin-123.